Consider the following 2090-residue polypeptide: Dysferlin (2090 aa).

Positions 1-101 (MLRVFILFAE…LATPSLSASF (101 aa)) constitute a C2 1 domain. The Cytoplasmic segment spans residues 1 to 2056 (MLRVFILFAE…FILWRRFRCA (2056 aa)). Positions 18, 19, 21, and 40 each coordinate Ca(2+). A disordered region spans residues 130 to 217 (VPLFPPPASL…SAPPRKLLSD (88 aa)). Acidic residues predominate over residues 155–172 (GGEEDTEDQGLTGDEAEP). Phosphoserine is present on Gly-164. Thr-166 is modified (phosphothreonine). Gly-167 is subject to Phosphoserine. The span at 188-199 (PRKPPSHPPPHY) shows a compositional bias: pro residues. C2 domains are found at residues 206 to 323 (RSSA…RKWL), 362 to 498 (DKED…EEEP), 1146 to 1272 (GVNR…PLTR), 1320 to 1448 (PPPQ…AESP), 1571 to 1689 (PMPP…ARCG), and 1805 to 1953 (GRPG…EKCS). Phosphoserine is present on Ala-209. Phosphothreonine is present on Pro-219. The Ca(2+) site is built by Asp-411, Asp-419, Asp-467, Asp-469, Asp-475, Asp-1178, Asp-1184, Asp-1240, and Asp-1242. Positions 1604, 1610, 1659, 1661, 1924, 1927, and 1930 each coordinate Ca(2+). Residues 2005–2027 (SEHEERPAGQGRDEPNMNPKLED) form a disordered region. A helical transmembrane segment spans residues 2057 to 2077 (IILFIILFILLLFLGVFVYAF). Residues 2078–2090 (PNYAAMKLVKPFR) lie on the Extracellular side of the membrane.

It belongs to the ferlin family. In terms of assembly, interacts with CAV3. Interacts with AHNAK; the interaction is direct and Ca(2+)-independent. Interacts with AHNAK2; the interaction is direct and Ca(2+)-independent. Interacts with ANXA1; the interaction is Ca(2+)- and injury state-dependent. Interacts with ANXA2; the interaction is Ca(2+)- and injury state-dependent. Interacts with CACNA1S and PARVB. Interacts with TRIM72/MG53; interaction is required for transport to sites of cell injury during repair patch formation. Interacts with RIPOR2; this interaction occurs during early myogenic differentiation. Requires Ca(2+) as cofactor. As to expression, expressed in skeletal and cardiac muscles (at protein level). Expressed in skeletal muscle and heart. Also found in brain, liver and kidney.

It is found in the cell membrane. The protein localises to the sarcolemma. It localises to the cytoplasmic vesicle membrane. Its function is as follows. Key calcium ion sensor involved in the Ca(2+)-triggered synaptic vesicle-plasma membrane fusion. Plays a role in the sarcolemma repair mechanism of both skeletal muscle and cardiomyocytes that permits rapid resealing of membranes disrupted by mechanical stress. The polypeptide is Dysferlin (Dysf) (Mus musculus (Mouse)).